Reading from the N-terminus, the 59-residue chain is MSTYESLMVMIGFANLIGGIMTWVISLLTLLFMLRKKDTHPIYITVKEKCLHEDPPIKG.

Residues 7–27 (LMVMIGFANLIGGIMTWVISL) traverse the membrane as a helical segment.

Its subcellular location is the cell membrane. Toxic component of a type I toxin-antitoxin (TA) system. Overexpression of txpA causes cell lysis; the TxpA protein has been suggested to act on the cell membrane or might possibly block cell wall synthesis. Overexpression in E.coli is not toxic. The polypeptide is Toxin TxpA (Bacillus subtilis (strain 168)).